We begin with the raw amino-acid sequence, 111 residues long: Nucleoid-associated protein NMC1380 (111 aa).

The protein belongs to the YbaB/EbfC family. As to quaternary structure, homodimer.

It is found in the cytoplasm. It localises to the nucleoid. Binds to DNA and alters its conformation. May be involved in regulation of gene expression, nucleoid organization and DNA protection. In Neisseria meningitidis serogroup C / serotype 2a (strain ATCC 700532 / DSM 15464 / FAM18), this protein is Nucleoid-associated protein NMC1380.